A 269-amino-acid chain; its full sequence is MAVVTTKQLLESGVYFGHATRKWNPKMKPYIFTSRNGIHIINLKKTSEEIEKAYQELLNIITSGGKALFLGTKKQIQSSIREEAQRSQQYYVDHRWLGGTLTNFKTILKRIELLHLLHKQEEEGLWKKLPKKEVVKLKRKRDKLEKFLGGIKDMKNLPQAIFIFDPEKESIAVAEARKLGIKVFGIVDTNCDPDLVDYIIPANDDAIRGVKLIIWLMANACVQGNGGVAEKAETFDAKNPLKPQNYNTLNKRPYQDSPRKPSYQNQNQR.

Positions 235–269 (FDAKNPLKPQNYNTLNKRPYQDSPRKPSYQNQNQR) are disordered.

This sequence belongs to the universal ribosomal protein uS2 family.

This chain is Small ribosomal subunit protein uS2, found in Aster yellows witches'-broom phytoplasma (strain AYWB).